We begin with the raw amino-acid sequence, 199 residues long: Streptomycin biosynthesis protein StrG (199 aa).

Its pathway is antibiotic biosynthesis; streptomycin biosynthesis. Its function is as follows. May be involved in the formation of N-methyl-L-glucosamine. The sequence is that of Streptomycin biosynthesis protein StrG (strG) from Streptomyces griseus.